The following is a 290-amino-acid chain: Shikimate dehydrogenase (NADP(+)) (290 aa).

Shikimate is bound by residues 19–21 (SLS) and S65. The Proton acceptor role is filled by K69. 2 residues coordinate shikimate: N90 and D105. Residues 129-133 (GAGGA) and L231 contribute to the NADP(+) site. Y233 lines the shikimate pocket. Position 254 (G254) interacts with NADP(+).

The protein belongs to the shikimate dehydrogenase family. Homodimer.

It carries out the reaction shikimate + NADP(+) = 3-dehydroshikimate + NADPH + H(+). It functions in the pathway metabolic intermediate biosynthesis; chorismate biosynthesis; chorismate from D-erythrose 4-phosphate and phosphoenolpyruvate: step 4/7. Functionally, involved in the biosynthesis of the chorismate, which leads to the biosynthesis of aromatic amino acids. Catalyzes the reversible NADPH linked reduction of 3-dehydroshikimate (DHSA) to yield shikimate (SA). In Latilactobacillus sakei subsp. sakei (strain 23K) (Lactobacillus sakei subsp. sakei), this protein is Shikimate dehydrogenase (NADP(+)).